A 327-amino-acid polypeptide reads, in one-letter code: GTPase Obg (327 aa).

The region spanning 2–160 is the Obg domain; sequence HTFKDSLNIT…LDLRLELVLI (159 aa). Residues 161–326 form the OBG-type G domain; sequence ADIGLVGLPN…LVNELFALSR (166 aa). GTP contacts are provided by residues 167–174, 192–196, 213–216, 280–283, and 307–309; these read GLPNAGKS, FTTKV, DVPG, NKLD, and SIY. Residues serine 174 and threonine 194 each coordinate Mg(2+).

It belongs to the TRAFAC class OBG-HflX-like GTPase superfamily. OBG GTPase family. In terms of assembly, monomer. Requires Mg(2+) as cofactor.

It is found in the cytoplasm. An essential GTPase which binds GTP, GDP and possibly (p)ppGpp with moderate affinity, with high nucleotide exchange rates and a fairly low GTP hydrolysis rate. Plays a role in control of the cell cycle, stress response, ribosome biogenesis and in those bacteria that undergo differentiation, in morphogenesis control. This Borrelia turicatae (strain 91E135) protein is GTPase Obg.